The chain runs to 576 residues: Tudor and KH domain-containing protein homolog (576 aa).

The disordered stretch occupies residues 40–60; that stretch reads EEADSGGQRPASGIRGQTEEQ. 2 KH domains span residues 65–127 and 136–199; these read EVCL…RALL and VVKV…RKML. Positions 209–224 are enriched in basic and acidic residues; that stretch reads LVRSMEEVEQRREPRR. Residues 209–253 are disordered; it reads LVRSMEEVEQRREPRRSPTNSIASSMYSSQTSLSSHTQPRDKLMA. Residues 232–243 are compositionally biased toward low complexity; the sequence is SSMYSSQTSLSS. A Tudor domain is found at 310-375; the sequence is APYVGQIVAA…CELRTDFLTL (66 aa). Residues 556-576 are disordered; it reads ATDLENGNNNNASTTNGASAH. Residues 561–576 show a composition bias toward low complexity; sequence NGNNNNASTTNGASAH.

The protein belongs to the Tdrkh family. In terms of assembly, interacts (via C-terminus) with AGO3 (via the N-terminal region when symmetrically methylated on arginine residues); this interaction is RNA-independent and may be required for AGO3 localization to the nuage. Interacts (via Tudor domain) with piwi (via N-terminus). Interacts with tral and me31B. In terms of tissue distribution, ovaries (at protein level). Expressed in the ovary and testis.

It localises to the cytoplasm. The protein resides in the nucleus. Its subcellular location is the cytoplasmic ribonucleoprotein granule. Functionally, involved in the piwi-interacting RNA (piRNA) metabolic process, which mediates the repression of transposable elements during meiosis by forming complexes composed of piRNAs and Piwi proteins, and governs the methylation and subsequent repression of transposons which is essential for germline integrity. Likely to act by recruiting Piwi proteins such as AGO3 and piwi to the piRNA biogenesis machinery in the nuage. Required for the final steps of primary piRNA biogenesis by participating in the 3' end-trimming of piwi-bound intermediates into mature piRNAs. The chain is Tudor and KH domain-containing protein homolog from Drosophila melanogaster (Fruit fly).